A 218-amino-acid polypeptide reads, in one-letter code: Ribonuclease HII (218 aa).

In terms of domain architecture, RNase H type-2 spans 12 to 206 (GRVAGVDEVG…VREALARSAL (195 aa)). Residues Asp-18, Glu-19, and Asp-115 each contribute to the a divalent metal cation site.

The protein belongs to the RNase HII family. Requires Mn(2+) as cofactor. It depends on Mg(2+) as a cofactor.

The protein localises to the cytoplasm. It catalyses the reaction Endonucleolytic cleavage to 5'-phosphomonoester.. Its function is as follows. Endonuclease that specifically degrades the RNA of RNA-DNA hybrids. The protein is Ribonuclease HII of Rhodospirillum rubrum (strain ATCC 11170 / ATH 1.1.1 / DSM 467 / LMG 4362 / NCIMB 8255 / S1).